A 268-amino-acid chain; its full sequence is MAELDIGQHCQVEHCRQRDFLPFVCDDCSGIFCLEHRSRESHGCPEVTVINERLKTDQHTSYPCSFKDCAERELVAVICPYCEKNFCLRHRHQSDHECEKLEIPKPRMAATQKLVKDIIDSKTGETASKRWKGAKNSETAAKVALMKLKMHADGDKSLPQTERIYFQVFLPKGSKEKSKPMFFCHRWSIGKAIDFAASLARLKNDNNKFTAKKLRLCHITSGEALPLDHTLETWIAKEDCPLYNGGNIILEYLNDEEQFCKNVESYLE.

At A2 the chain carries N-acetylalanine. AN1-type zinc fingers lie at residues 4–52 (LDIG…VINE) and 58–106 (QHTS…IPKP). Residues C10, C15, C25, C28, C33, H36, H42, C44, C64, C69, C79, C82, C87, H90, H96, and C98 each contribute to the Zn(2+) site. Residues 160–260 (QTERIYFQVF…EYLNDEEQFC (101 aa)) are ubiquitin-like.

In terms of assembly, associates with the 26S proteasome; this association occurs upon exposure to arsenite and is reduced in the presence of ATP. Interacts (via AN1-type 1 and 2 zinc fingers) with PSMD1; this interaction is increased upon arsenite treatment and occurs in an ATP-independent manner. Interacts with PSMC4. Interacts with PSMA1. Interacts (via its ubiquitin-like region) with VCP; this interaction occurs in an arsenite-dependent manner and is necessary for the recruitment of the ubiquitin-selective ATPase VCP to stress granules (SGs).

It localises to the cytoplasm. Its subcellular location is the stress granule. Functionally, plays a role in the regulation of cytoplasmic stress granules (SGs) turnover. SGs are dynamic and transient cytoplasmic ribonucleoprotein assemblies important for cellular protein homeostasis when protein production is suspended after acute exogenous stress. Associates with SGs and is involved in the efficient and specific arsenite-induced clearance process of SGs through the recruitment of the ubiquitin-selective ATPase VCP and the 26S proteasome. This process requires both complexes for efficient degradation of damaged ubiquitinated SG proteins during recovery from arsenite stress, and hence avoiding aberrant cytoplasmic SGs degradation via autophagy. This Homo sapiens (Human) protein is AN1-type zinc finger protein 1.